Here is a 986-residue protein sequence, read N- to C-terminus: Translation initiation factor IF-2 (986 aa).

The span at 49-59 (EFAKDNAKGDS) shows a compositional bias: basic and acidic residues. Positions 49–370 (EFAKDNAKGD…KNRLAKRHEY (322 aa)) are disordered. Residues 60–112 (KPASSAQKPAAKPVQQRRPAAPSAPASTSSSAPTPAAPARQASPASAHQQAPT) are compositionally biased toward low complexity. The span at 135 to 168 (GQHDNRENGRDNREGRENGRQSRPNDRRNNDRRN) shows a compositional bias: basic and acidic residues. The segment covering 170-182 (QGRPNNGQPGQHQ) has biased composition (low complexity). Gly residues-rich tracts occupy residues 254–286 (GRGGRPGRPGQGQGQGRGFRGGRPGQGGQGGPR) and 296–353 (GQGG…GRQG). Over residues 357–366 (SKARKNRLAK) the composition is skewed to basic residues. Positions 479–651 (PRPPVVTVMG…VLLTADAELD (173 aa)) constitute a tr-type G domain. The tract at residues 488 to 495 (GHVDHGKT) is G1. 488–495 (GHVDHGKT) provides a ligand contact to GTP. The segment at 513–517 (GITQR) is G2. The tract at residues 538 to 541 (DTPG) is G3. GTP contacts are provided by residues 538–542 (DTPGH) and 592–595 (NKID). Residues 592-595 (NKID) form a G4 region. Positions 628 to 630 (SAK) are G5.

This sequence belongs to the TRAFAC class translation factor GTPase superfamily. Classic translation factor GTPase family. IF-2 subfamily.

Its subcellular location is the cytoplasm. One of the essential components for the initiation of protein synthesis. Protects formylmethionyl-tRNA from spontaneous hydrolysis and promotes its binding to the 30S ribosomal subunits. Also involved in the hydrolysis of GTP during the formation of the 70S ribosomal complex. This Bifidobacterium longum subsp. infantis (strain ATCC 15697 / DSM 20088 / JCM 1222 / NCTC 11817 / S12) protein is Translation initiation factor IF-2.